The primary structure comprises 81 residues: MLSYGMPCHVLRRNTRILMKEKKKRLGIMFWQNVERRRCPETHSNEGASQGKRKRSERLKSVDFKKGVYCACACACTFQQE.

This is an uncharacterized protein from Schizosaccharomyces pombe (strain 972 / ATCC 24843) (Fission yeast).